We begin with the raw amino-acid sequence, 185 residues long: MAEERQIPRMKTHYFEVIRKALQEKFNYKNAMQIPRIDKIVINMGIGEATADSKKPSLAAEDLGLITGQKAVVTRARNSIATFKVREGMPLGAKVTLRKDRMFEFLDRLVTIALPRVRDFRGLNPKSFDGRGNFAMGIKEHIVFPEINYDKVDQIWGMDIIVCTTAKTDDEARELLRAFNFPFRS.

It belongs to the universal ribosomal protein uL5 family. In terms of assembly, part of the 50S ribosomal subunit; part of the 5S rRNA/L5/L18/L25 subcomplex. Contacts the 5S rRNA and the P site tRNA. Forms a bridge to the 30S subunit in the 70S ribosome.

This is one of the proteins that bind and probably mediate the attachment of the 5S RNA into the large ribosomal subunit, where it forms part of the central protuberance. In the 70S ribosome it contacts protein S13 of the 30S subunit (bridge B1b), connecting the 2 subunits; this bridge is implicated in subunit movement. Contacts the P site tRNA; the 5S rRNA and some of its associated proteins might help stabilize positioning of ribosome-bound tRNAs. The chain is Large ribosomal subunit protein uL5 from Bartonella tribocorum (strain CIP 105476 / IBS 506).